The sequence spans 95 residues: uncharacterized protein (95 aa).

Residues 27-47 (SFGLAIIGILLIACEIILFLT) form a helical membrane-spanning segment.

It is found in the membrane. This is an uncharacterized protein from Homo sapiens (Human).